A 329-amino-acid polypeptide reads, in one-letter code: UDP-glucose 4-epimerase (329 aa).

Residues 13 to 14 (YV), 33 to 38 (HNLSTG), 53 to 54 (DI), 76 to 80 (FAAFS), N95, T120, Y144, K148, and F172 each bind NAD(+). T120 and Y144 together coordinate substrate. Residue Y144 is the Proton acceptor of the active site. Substrate-binding positions include N173, 190–191 (HL), 207–209 (SVY), R221, and 281–284 (RGRD).

The protein belongs to the NAD(P)-dependent epimerase/dehydratase family. Homodimer. The cofactor is NAD(+).

It catalyses the reaction UDP-alpha-D-glucose = UDP-alpha-D-galactose. The protein operates within carbohydrate metabolism; galactose metabolism. In terms of biological role, involved in the metabolism of galactose. Catalyzes the conversion of UDP-galactose (UDP-Gal) to UDP-glucose (UDP-Glc) through a mechanism involving the transient reduction of NAD. The polypeptide is UDP-glucose 4-epimerase (galE) (Streptomyces lividans).